The sequence spans 471 residues: Secretogranin-3 (471 aa).

An N-terminal signal peptide occupies residues 1–22; sequence MGFLWTGTWIVVLMLHSSPIQA. Disordered stretches follow at residues 23–72 and 86–105; these read FPKP…ESNY and EKEKNEKERQSVKISPNDNK. Over residues 32–45 the composition is skewed to basic and acidic residues; that stretch reads KPLHNRELSAERPL. The residue at position 40 (serine 40) is a Phosphoserine. Serine 40 carries O-linked (Xyl...) (chondroitin sulfate) serine glycosylation. Asparagine 71 carries N-linked (GlcNAc...) asparagine glycosylation. The segment covering 86 to 96 has biased composition (basic and acidic residues); it reads EKEKNEKERQS. Asparagine 353 carries an N-linked (GlcNAc...) asparagine glycan. Positions 357–409 are disordered; the sequence is LFAVPSEKSHEETDSTKEEAAKMEKEYGTLKDSTKDDDSNPRGKTDEHKGKTE. Residues 363-409 show a composition bias toward basic and acidic residues; that stretch reads EKSHEETDSTKEEAAKMEKEYGTLKDSTKDDDSNPRGKTDEHKGKTE. Serine 365 is subject to Phosphoserine.

As to quaternary structure, interacts with CHGA. Interacts with secretogranin II/SCG2. Interacts (via C-terminus) with CPE.

It is found in the cytoplasmic vesicle. The protein resides in the secretory vesicle. Its subcellular location is the secretory vesicle membrane. It localises to the secreted. Member of the granin protein family that regulates the biogenesis of secretory granules. Acts as a sorting receptor for intragranular proteins including chromogranin A/CHGA. May also play a role in angiogenesis. Promotes endothelial proliferation, migration and tube formation through MEK/ERK signaling pathway. The polypeptide is Secretogranin-3 (SCG3) (Bos taurus (Bovine)).